A 614-amino-acid chain; its full sequence is Afadin- and alpha-actinin-binding protein (614 aa).

2 coiled-coil regions span residues 131–227 (MDHL…IAMD) and 266–293 (RQKQ…SLLS). 3 positions are modified to phosphoserine: S290, S293, and S312. The interval 292 to 317 (LSPQKKKPRERVDDSTGTVISDVEED) is disordered. Positions 374–460 (ISRQDHEQET…RSFTEAAIRL (87 aa)) form a coiled coil. 3 positions are modified to phosphoserine: S536, S540, and S542.

Belongs to the ADIP family. In terms of assembly, interacts with afadin and alpha-actinin. Interacts with VAV2. Interacts with SSX2 and SSX3. Does not interact with SSX1 and SSX4. Interacts with PCM1. Interacts with WRAP73. As to expression, widely expressed, with the highest expression in brain, intermediate expression in kidney, testis, spinal cord, liver, heart, lung, skeletal muscle, ovary, fetal liver and fetal brain, and little to no expression in pancreas and spleen. All specific brain regions showed intermediate to high expression, with highest expression in amygdala. Also expressed in fetal tissues, mainly in liver and brain.

It localises to the cell junction. It is found in the adherens junction. The protein resides in the nucleus. Its subcellular location is the cytoplasm. The protein localises to the cytoskeleton. It localises to the microtubule organizing center. It is found in the centrosome. The protein resides in the centriolar satellite. Its subcellular location is the cilium basal body. Functionally, belongs to an adhesion system, which plays a role in the organization of homotypic, interneuronal and heterotypic cell-cell adherens junctions (AJs). May connect the nectin-afadin and E-cadherin-catenin system through alpha-actinin and may be involved in organization of the actin cytoskeleton at AJs through afadin and alpha-actinin. Involved in cell movement: localizes at the leading edge of moving cells in response to PDGF and is required for the formation of the leading edge and the promotion of cell movement, possibly via activation of Rac signaling. Acts as a centrosome maturation factor, probably by maintaining the integrity of the pericentriolar material and proper microtubule nucleation at mitotic spindle poles. The function seems to implicate at least in part WRAP73; the SSX2IP:WRAP73 complex is proposed to act as regulator of spindle anchoring at the mitotic centrosome. Involved in ciliogenesis. It is required for targeted recruitment of the BBSome, CEP290, RAB8, and SSTR3 to the cilia. The chain is Afadin- and alpha-actinin-binding protein (SSX2IP) from Homo sapiens (Human).